Here is a 68-residue protein sequence, read N- to C-terminus: Large ribosomal subunit protein bL35 (68 aa).

It belongs to the bacterial ribosomal protein bL35 family.

The polypeptide is Large ribosomal subunit protein bL35 (Rickettsia typhi (strain ATCC VR-144 / Wilmington)).